A 258-amino-acid polypeptide reads, in one-letter code: Imidazole glycerol phosphate synthase subunit HisF (258 aa).

Residues aspartate 11 and aspartate 130 contribute to the active site.

The protein belongs to the HisA/HisF family. Heterodimer of HisH and HisF.

Its subcellular location is the cytoplasm. It catalyses the reaction 5-[(5-phospho-1-deoxy-D-ribulos-1-ylimino)methylamino]-1-(5-phospho-beta-D-ribosyl)imidazole-4-carboxamide + L-glutamine = D-erythro-1-(imidazol-4-yl)glycerol 3-phosphate + 5-amino-1-(5-phospho-beta-D-ribosyl)imidazole-4-carboxamide + L-glutamate + H(+). It functions in the pathway amino-acid biosynthesis; L-histidine biosynthesis; L-histidine from 5-phospho-alpha-D-ribose 1-diphosphate: step 5/9. IGPS catalyzes the conversion of PRFAR and glutamine to IGP, AICAR and glutamate. The HisF subunit catalyzes the cyclization activity that produces IGP and AICAR from PRFAR using the ammonia provided by the HisH subunit. In Sodalis glossinidius (strain morsitans), this protein is Imidazole glycerol phosphate synthase subunit HisF.